The following is a 655-amino-acid chain: p-hydroxybenzoic acid efflux pump subunit AaeB (655 aa).

Helical transmembrane passes span 13-33, 38-58, 69-89, 93-113, 121-141, 152-172, 370-390, 407-427, 431-451, 459-479, and 482-502; these read FAVK…HFQL, WAVL…GGEP, LRII…IAMI, LLMI…SSLV, WGLA…EPLL, EIVI…PRSI, LFWL…IAVV, FIYG…VIIP, QSML…GIEV, MGAL…TFHF, and FLDS…VILL.

This sequence belongs to the aromatic acid exporter ArAE (TC 2.A.85) family.

Its subcellular location is the cell inner membrane. Functionally, forms an efflux pump with AaeA. Could function as a metabolic relief valve, allowing to eliminate certain compounds when they accumulate to high levels in the cell. The chain is p-hydroxybenzoic acid efflux pump subunit AaeB from Escherichia coli O81 (strain ED1a).